A 136-amino-acid chain; its full sequence is Peptide methionine sulfoxide reductase MsrB (136 aa).

The 128-residue stretch at 9–136 folds into the MsrB domain; that stretch reads DAEWKALLAE…NSASLDFKPK (128 aa). Zn(2+) is bound by residues C53, C56, C102, and C105. The Nucleophile role is filled by C125.

This sequence belongs to the MsrB Met sulfoxide reductase family. Requires Zn(2+) as cofactor.

It catalyses the reaction L-methionyl-[protein] + [thioredoxin]-disulfide + H2O = L-methionyl-(R)-S-oxide-[protein] + [thioredoxin]-dithiol. The polypeptide is Peptide methionine sulfoxide reductase MsrB (Polaromonas sp. (strain JS666 / ATCC BAA-500)).